We begin with the raw amino-acid sequence, 479 residues long: UDP-N-acetylmuramoyl-L-alanyl-D-glutamate--2,6-diaminopimelate ligase (479 aa).

Ser-21 is a binding site for UDP-N-acetyl-alpha-D-muramoyl-L-alanyl-D-glutamate. ATP is bound at residue 98–104 (GTNGKSS). Residues 144–145 (TT), Ser-171, Gln-177, and Arg-179 contribute to the UDP-N-acetyl-alpha-D-muramoyl-L-alanyl-D-glutamate site. Lys-211 is subject to N6-carboxylysine. Meso-2,6-diaminopimelate is bound by residues Arg-372, 396–399 (DNPR), Gly-446, and Glu-450. The Meso-diaminopimelate recognition motif motif lies at 396-399 (DNPR).

This sequence belongs to the MurCDEF family. MurE subfamily. The cofactor is Mg(2+). Post-translationally, carboxylation is probably crucial for Mg(2+) binding and, consequently, for the gamma-phosphate positioning of ATP.

The protein resides in the cytoplasm. The enzyme catalyses UDP-N-acetyl-alpha-D-muramoyl-L-alanyl-D-glutamate + meso-2,6-diaminopimelate + ATP = UDP-N-acetyl-alpha-D-muramoyl-L-alanyl-gamma-D-glutamyl-meso-2,6-diaminopimelate + ADP + phosphate + H(+). It functions in the pathway cell wall biogenesis; peptidoglycan biosynthesis. Catalyzes the addition of meso-diaminopimelic acid to the nucleotide precursor UDP-N-acetylmuramoyl-L-alanyl-D-glutamate (UMAG) in the biosynthesis of bacterial cell-wall peptidoglycan. This Rickettsia conorii (strain ATCC VR-613 / Malish 7) protein is UDP-N-acetylmuramoyl-L-alanyl-D-glutamate--2,6-diaminopimelate ligase.